The primary structure comprises 422 residues: Zinc-regulated transporter 2 (422 aa).

The Extracellular portion of the chain corresponds to 1–27 (MVDLIARDDSVDTCQASNGYNGHAGLR). A helical membrane pass occupies residues 28-48 (ILAVFIILISSGLGVYFPILS). Topologically, residues 49–60 (SRYSFIRLPNWC) are cytoplasmic. The chain crosses the membrane as a helical span at residues 61-81 (FFIAKFFGSGVIVATAFVHLL). Over 82–99 (QPAAEALGDECLGGTFAE) the chain is Extracellular. The helical transmembrane segment at 100–120 (YPWAFGICLMSLFLLFFTEII) threads the bilayer. Residues 121 to 262 (THYFVAKTLG…EEDKEQYLNQ (142 aa)) are Cytoplasmic-facing. Phosphoserine occurs at positions 148, 149, 162, and 170. Threonine 188 bears the Phosphothreonine mark. Residues 263–283 (ILAVFILEFGIIFHSVFVGLS) form a helical membrane-spanning segment. The Extracellular portion of the chain corresponds to 284-290 (LSVAGEE). A helical membrane pass occupies residues 291–311 (FETLFIVLTFHQMFEGLGLGT). The Cytoplasmic portion of the chain corresponds to 312-326 (RVAETNWPESKKYMP). The chain crosses the membrane as a helical span at residues 327–347 (WLMGLAFTLTSPIAVAVGIGV). The Extracellular portion of the chain corresponds to 348-358 (RHSWIPGSRRA). Residues 359–379 (LIANGVFDSISSGILIYTGLV) traverse the membrane as a helical segment. At 380-400 (ELMAHEFLYSNQFKGPDGLKK) the chain is on the cytoplasmic side. The helical transmembrane segment at 401–421 (MLSAYLIMCCGAALMALLGKW) threads the bilayer. Position 422 (alanine 422) is a topological domain, extracellular.

This sequence belongs to the ZIP transporter (TC 2.A.5) family.

The protein localises to the membrane. Its function is as follows. Low-affinity zinc transport protein. Active in zinc-replete cells and is time-, temperature- and concentration-dependent and prefers zinc over other metals as its substrate. The sequence is that of Zinc-regulated transporter 2 (ZRT2) from Saccharomyces cerevisiae (strain ATCC 204508 / S288c) (Baker's yeast).